Here is a 197-residue protein sequence, read N- to C-terminus: Guanylyl cyclase-activating protein 2 (197 aa).

A lipid anchor (N-myristoyl glycine) is attached at G2. EF-hand domains lie at 15–50, 51–86, 87–122, and 138–173; these read DVAELQEWYKKFVVECPSGTLFMHEFKRFFGVQDNQ, EAADYVEHMFRAFDKNGDNTIDFLEYVAALNLVLRG, KLEHKLKWTFKVYDRDGNGCIDKTELLEIVESIYNL, and SPEQVVDRIFQLVDENGDGQLSLDEFIDGARKDKWV. Positions 64, 66, 68, 70, 75, 100, 102, 104, 106, 111, 151, 153, 155, 157, and 162 each coordinate Ca(2+).

In terms of tissue distribution, low expression in retina.

Stimulates guanylyl cyclase 1 (GC1) and GC2 when free calcium ions concentration is low and inhibits guanylyl cyclases when free calcium ions concentration is elevated. This Ca(2+)-sensitive regulation of guanylyl cyclase (GC) is a key event in recovery of the dark state of rod photoreceptors following light exposure. This chain is Guanylyl cyclase-activating protein 2 (GUCA1B), found in Lithobates pipiens (Northern leopard frog).